The primary structure comprises 485 residues: ATP synthase subunit beta (485 aa).

Over residues 1-11 the composition is skewed to basic and acidic residues; that stretch reads MPATETADKNT. The interval 1 to 20 is disordered; that stretch reads MPATETADKNTKSANSDTSG. Position 170-177 (170-177) interacts with ATP; it reads GGAGVGKT.

Belongs to the ATPase alpha/beta chains family. F-type ATPases have 2 components, CF(1) - the catalytic core - and CF(0) - the membrane proton channel. CF(1) has five subunits: alpha(3), beta(3), gamma(1), delta(1), epsilon(1). CF(0) has three main subunits: a(1), b(2) and c(9-12). The alpha and beta chains form an alternating ring which encloses part of the gamma chain. CF(1) is attached to CF(0) by a central stalk formed by the gamma and epsilon chains, while a peripheral stalk is formed by the delta and b chains.

The protein resides in the cell membrane. The catalysed reaction is ATP + H2O + 4 H(+)(in) = ADP + phosphate + 5 H(+)(out). Functionally, produces ATP from ADP in the presence of a proton gradient across the membrane. The catalytic sites are hosted primarily by the beta subunits. This is ATP synthase subunit beta from Mycolicibacterium paratuberculosis (strain ATCC BAA-968 / K-10) (Mycobacterium paratuberculosis).